The primary structure comprises 156 residues: ATP synthase subunit b (156 aa).

The chain crosses the membrane as a helical span at residues 13 to 33; the sequence is AFIIFVWFCMKFVWPPLMNAI.

The protein belongs to the ATPase B chain family. In terms of assembly, F-type ATPases have 2 components, F(1) - the catalytic core - and F(0) - the membrane proton channel. F(1) has five subunits: alpha(3), beta(3), gamma(1), delta(1), epsilon(1). F(0) has three main subunits: a(1), b(2) and c(10-14). The alpha and beta chains form an alternating ring which encloses part of the gamma chain. F(1) is attached to F(0) by a central stalk formed by the gamma and epsilon chains, while a peripheral stalk is formed by the delta and b chains.

The protein resides in the cell inner membrane. Its function is as follows. F(1)F(0) ATP synthase produces ATP from ADP in the presence of a proton or sodium gradient. F-type ATPases consist of two structural domains, F(1) containing the extramembraneous catalytic core and F(0) containing the membrane proton channel, linked together by a central stalk and a peripheral stalk. During catalysis, ATP synthesis in the catalytic domain of F(1) is coupled via a rotary mechanism of the central stalk subunits to proton translocation. Component of the F(0) channel, it forms part of the peripheral stalk, linking F(1) to F(0). The protein is ATP synthase subunit b of Shewanella woodyi (strain ATCC 51908 / MS32).